The following is a 393-amino-acid chain: tRNA (guanine-N(7)-)-methyltransferase (393 aa).

The S-adenosyl-L-methionine site is built by Glu-124, Glu-149, and Asp-176. Asp-232 lines the substrate pocket.

Belongs to the class I-like SAM-binding methyltransferase superfamily. TrmB family.

It catalyses the reaction guanosine(46) in tRNA + S-adenosyl-L-methionine = N(7)-methylguanosine(46) in tRNA + S-adenosyl-L-homocysteine. It participates in tRNA modification; N(7)-methylguanine-tRNA biosynthesis. Functionally, catalyzes the formation of N(7)-methylguanine at position 46 (m7G46) in tRNA. This chain is tRNA (guanine-N(7)-)-methyltransferase, found in Helicobacter pylori (strain ATCC 700392 / 26695) (Campylobacter pylori).